Reading from the N-terminus, the 164-residue chain is Cytochrome c-type biogenesis protein CcmE (164 aa).

At Met-1–Arg-7 the chain is on the cytoplasmic side. A helical; Signal-anchor for type II membrane protein transmembrane segment spans residues Leu-8–Ala-28. At Met-29 to Arg-164 the chain is on the periplasmic side. Heme contacts are provided by His-122 and Tyr-126. Residues Lys-137–Pro-149 are compositionally biased toward basic and acidic residues. A disordered region spans residues Lys-137–Arg-164. Residues Pro-153–Arg-164 show a composition bias toward low complexity.

Belongs to the CcmE/CycJ family.

The protein resides in the cell inner membrane. Heme chaperone required for the biogenesis of c-type cytochromes. Transiently binds heme delivered by CcmC and transfers the heme to apo-cytochromes in a process facilitated by CcmF and CcmH. This Rhodopseudomonas palustris (strain BisB5) protein is Cytochrome c-type biogenesis protein CcmE.